The primary structure comprises 427 residues: Putative ABC transporter substrate-binding protein YesO (427 aa).

The protein belongs to the bacterial solute-binding protein 1 family.

May play a role in the degradation of type I rhamnogalacturonan derived from plant cell walls. The chain is Putative ABC transporter substrate-binding protein YesO (yesO) from Bacillus subtilis (strain 168).